The primary structure comprises 247 residues: 2,3-bisphosphoglycerate-dependent phosphoglycerate mutase (247 aa).

Substrate-binding positions include 7-14 (RHGESEWN), 20-21 (TG), Arg59, 86-89 (ERHY), Lys97, 113-114 (RR), and 182-183 (GN). The active-site Tele-phosphohistidine intermediate is His8. The Proton donor/acceptor role is filled by Glu86.

The protein belongs to the phosphoglycerate mutase family. BPG-dependent PGAM subfamily.

The enzyme catalyses (2R)-2-phosphoglycerate = (2R)-3-phosphoglycerate. It functions in the pathway carbohydrate degradation; glycolysis; pyruvate from D-glyceraldehyde 3-phosphate: step 3/5. Functionally, catalyzes the interconversion of 2-phosphoglycerate and 3-phosphoglycerate. In Treponema denticola (strain ATCC 35405 / DSM 14222 / CIP 103919 / JCM 8153 / KCTC 15104), this protein is 2,3-bisphosphoglycerate-dependent phosphoglycerate mutase.